Reading from the N-terminus, the 125-residue chain is Neuropeptide B (125 aa).

The signal sequence occupies residues 1–24 (MARSATLAAAALALCLLLAPPGLA). Positions 54–73 (RRSQPYRGAEPPGGAGASPE) are disordered. A propeptide spanning residues 56–125 (SQPYRGAEPP…SLRAADCLAA (70 aa)) is cleaved from the precursor.

This sequence belongs to the neuropeptide B/W family. As to expression, widely expressed in the central nervous system. High levels are found in substantia nigra, hypothalamus, hippocampus, spinal cord, placenta and fetal brain; lower levels are found in testis, uterus and ovary. Also detected at high levels in colorectal adenocarcinoma.

It localises to the secreted. In terms of biological role, may be involved in the regulation of feeding, neuroendocrine system, memory, learning and in the afferent pain pathway. The protein is Neuropeptide B (NPB) of Homo sapiens (Human).